We begin with the raw amino-acid sequence, 182 residues long: Hexose transport activator protein (182 aa).

Positions 46–65 (GIWGPMEKKPGGVGKKKGSE) are disordered.

Multicopy expression suppresses glucose-uptake defects in various yeast mutants. In Saccharomyces cerevisiae (strain ATCC 204508 / S288c) (Baker's yeast), this protein is Hexose transport activator protein (AHT1).